Consider the following 281-residue polypeptide: Proteasome subunit beta (281 aa).

Residues 1-53 (MEANTRSTGRLPAAFLTPGSSSFMDFLSDQSPEMLPGNRSLPPLQGAVEAPHG) constitute a propeptide, removed in mature form; by autocatalysis. Threonine 54 serves as the catalytic Nucleophile.

Belongs to the peptidase T1B family. In terms of assembly, the 20S proteasome core is composed of 14 alpha and 14 beta subunits that assemble into four stacked heptameric rings, resulting in a barrel-shaped structure. The two inner rings, each composed of seven catalytic beta subunits, are sandwiched by two outer rings, each composed of seven alpha subunits. The catalytic chamber with the active sites is on the inside of the barrel. Has a gated structure, the ends of the cylinder being occluded by the N-termini of the alpha-subunits. Is capped by the proteasome-associated ATPase, ARC.

The protein localises to the cytoplasm. The catalysed reaction is Cleavage of peptide bonds with very broad specificity.. Its pathway is protein degradation; proteasomal Pup-dependent pathway. Its activity is regulated as follows. The formation of the proteasomal ATPase ARC-20S proteasome complex, likely via the docking of the C-termini of ARC into the intersubunit pockets in the alpha-rings, may trigger opening of the gate for substrate entry. Interconversion between the open-gate and close-gate conformations leads to a dynamic regulation of the 20S proteasome proteolysis activity. Component of the proteasome core, a large protease complex with broad specificity involved in protein degradation. This is Proteasome subunit beta from Streptomyces griseus subsp. griseus (strain JCM 4626 / CBS 651.72 / NBRC 13350 / KCC S-0626 / ISP 5235).